The sequence spans 139 residues: Large ribosomal subunit protein uL16 (139 aa).

Residues 1 to 11 are compositionally biased toward basic residues; sequence MLQPKRTKYRK. Residues 1-30 are disordered; sequence MLQPKRTKYRKPFLQSHDKRKAHKGNKVSF.

This sequence belongs to the universal ribosomal protein uL16 family. In terms of assembly, part of the 50S ribosomal subunit.

Binds 23S rRNA and is also seen to make contacts with the A and possibly P site tRNAs. This is Large ribosomal subunit protein uL16 from Mycoplasmopsis synoviae (strain 53) (Mycoplasma synoviae).